Reading from the N-terminus, the 249-residue chain is Aspartate/glutamate leucyltransferase (249 aa).

The protein belongs to the R-transferase family. Bpt subfamily.

Its subcellular location is the cytoplasm. The catalysed reaction is N-terminal L-glutamyl-[protein] + L-leucyl-tRNA(Leu) = N-terminal L-leucyl-L-glutamyl-[protein] + tRNA(Leu) + H(+). It carries out the reaction N-terminal L-aspartyl-[protein] + L-leucyl-tRNA(Leu) = N-terminal L-leucyl-L-aspartyl-[protein] + tRNA(Leu) + H(+). In terms of biological role, functions in the N-end rule pathway of protein degradation where it conjugates Leu from its aminoacyl-tRNA to the N-termini of proteins containing an N-terminal aspartate or glutamate. This Brucella suis (strain ATCC 23445 / NCTC 10510) protein is Aspartate/glutamate leucyltransferase.